We begin with the raw amino-acid sequence, 404 residues long: MTKHSQKQNRQKQTTQKQTRRKKPAGKLKAKSEAKLDTRGKPETTEKKGLHERNLHRDGYDFEQLIEASPALKPYVRPNPYGNLSIDFADPLAVKALNLALLQLHYRIEYWDIPAGFLCPPIPGRVDYLHYIADLLAGIDSDTVGDKAEEQVEEIGTRQNVPYASKPESSAPKQRYKSQKRMKINALDIGTGANGIYPILGIQAYGWRFVASDVDPLSIENVNRIVGQNKALQGKLKTRLQTDHQKVFHGIIQADDRFDITLCNPPFHASLSEASEGSLRKVKNLAANRAAKGHKPEPAASKAKPDANELNFGGQKAELWCEGGEKQFLANMIRESKDFATQCLWFTSLVSKKENLQPCYAALEKVGAVTVKTIDMAQGNKLTRVLAWSYLTPKQQALWAKYRS.

2 stretches are compositionally biased toward basic residues: residues 1–10 and 18–29; these read MTKHSQKQNR and QTRRKKPAGKLK. Disordered stretches follow at residues 1 to 54, 156 to 177, and 289 to 308; these read MTKH…HERN, GTRQ…QRYK, and RAAK…PDAN. Basic and acidic residues predominate over residues 30-54; sequence AKSEAKLDTRGKPETTEKKGLHERN. The span at 157 to 172 shows a compositional bias: polar residues; it reads TRQNVPYASKPESSAP.

Belongs to the methyltransferase superfamily. METTL16/RlmF family.

Its subcellular location is the cytoplasm. It carries out the reaction adenosine(1618) in 23S rRNA + S-adenosyl-L-methionine = N(6)-methyladenosine(1618) in 23S rRNA + S-adenosyl-L-homocysteine + H(+). Its function is as follows. Specifically methylates the adenine in position 1618 of 23S rRNA. The sequence is that of Ribosomal RNA large subunit methyltransferase F from Shewanella sediminis (strain HAW-EB3).